The chain runs to 446 residues: Tubulin beta chain (446 aa).

Residues Gln-11, Glu-69, Ser-138, Gly-142, Thr-143, Gly-144, Asn-204, and Asn-226 each contribute to the GTP site. Residue Glu-69 participates in Mg(2+) binding. The disordered stretch occupies residues 422–446 (YQQYQDAGIDEEEEEYEEELPEGEE). The span at 429-446 (GIDEEEEEYEEELPEGEE) shows a compositional bias: acidic residues.

This sequence belongs to the tubulin family. In terms of assembly, dimer of alpha and beta chains. A typical microtubule is a hollow water-filled tube with an outer diameter of 25 nm and an inner diameter of 15 nM. Alpha-beta heterodimers associate head-to-tail to form protofilaments running lengthwise along the microtubule wall with the beta-tubulin subunit facing the microtubule plus end conferring a structural polarity. Microtubules usually have 13 protofilaments but different protofilament numbers can be found in some organisms and specialized cells. The cofactor is Mg(2+).

It localises to the cytoplasm. The protein localises to the cytoskeleton. In terms of biological role, tubulin is the major constituent of microtubules, a cylinder consisting of laterally associated linear protofilaments composed of alpha- and beta-tubulin heterodimers. Microtubules grow by the addition of GTP-tubulin dimers to the microtubule end, where a stabilizing cap forms. Below the cap, tubulin dimers are in GDP-bound state, owing to GTPase activity of alpha-tubulin. This Gibberella zeae (strain ATCC MYA-4620 / CBS 123657 / FGSC 9075 / NRRL 31084 / PH-1) (Wheat head blight fungus) protein is Tubulin beta chain (TUB2).